The following is a 292-amino-acid chain: 2-methylisocitrate lyase (292 aa).

44–46 serves as a coordination point for substrate; the sequence is SGA. Residues Asp-84 and Asp-86 each coordinate Mg(2+). Substrate is bound by residues 121-122, Arg-156, Glu-186, 208-210, Arg-239, and Arg-268; these read CG and NMT.

This sequence belongs to the isocitrate lyase/PEP mutase superfamily. Methylisocitrate lyase family. Homotetramer; dimer of dimers. The cofactor is Mg(2+).

The enzyme catalyses (2S,3R)-3-hydroxybutane-1,2,3-tricarboxylate = pyruvate + succinate. It functions in the pathway organic acid metabolism; propanoate degradation. Its function is as follows. Involved in the catabolism of short chain fatty acids (SCFA) via the 2-methylcitrate cycle I (propionate degradation route). Catalyzes the thermodynamically favored C-C bond cleavage of (2R,3S)-2-methylisocitrate to yield pyruvate and succinate via an alpha-carboxy-carbanion intermediate. In Shewanella oneidensis (strain ATCC 700550 / JCM 31522 / CIP 106686 / LMG 19005 / NCIMB 14063 / MR-1), this protein is 2-methylisocitrate lyase.